A 413-amino-acid polypeptide reads, in one-letter code: Transmembrane protein 237B (413 aa).

A disordered region spans residues 1 to 162 (MDPEAKVSSS…EDDDVITDPQ (162 aa)). Polar residues predominate over residues 112–122 (DLVSNGDTLDQ). The next 4 membrane-spanning stretches (helical) occupy residues 233-253 (VIGL…IIVV), 274-294 (LAYP…VSAF), 312-332 (LSPV…SLSQ), and 360-380 (ILYP…LAWI).

This sequence belongs to the TMEM237 family.

It localises to the membrane. The protein resides in the cell projection. Its subcellular location is the cilium. In terms of biological role, component of the transition zone in primary cilia. Required for ciliogenesis. The chain is Transmembrane protein 237B (tmem237b) from Danio rerio (Zebrafish).